The primary structure comprises 221 residues: Prolactin-3B1 (221 aa).

The first 30 residues, 1–30, serve as a signal peptide directing secretion; it reads MQLPLTPLSFSGTLLLMAMSNFLLWEHVTS. Cystine bridges form between Cys-81-Cys-196 and Cys-213-Cys-221.

It belongs to the somatotropin/prolactin family.

Its subcellular location is the secreted. This is Prolactin-3B1 (PRL3B1) from Mesocricetus auratus (Golden hamster).